The following is a 137-amino-acid chain: Putative pre-16S rRNA nuclease (137 aa).

The protein belongs to the YqgF nuclease family.

It is found in the cytoplasm. In terms of biological role, could be a nuclease involved in processing of the 5'-end of pre-16S rRNA. The sequence is that of Putative pre-16S rRNA nuclease from Buchnera aphidicola subsp. Baizongia pistaciae (strain Bp).